The chain runs to 1206 residues: DNA polymerase beta (1206 aa).

Repeat copies occupy residues 1071–1074, 1075–1078, 1079–1082, and 1083–1086. Residues 1071 to 1086 form a 4 X 4 AA tandem repeats of A-G-[NK]-[PA] region; sequence AGNPAGNPAGNPAGNA.

This sequence belongs to the DNA polymerase type-B family.

It catalyses the reaction DNA(n) + a 2'-deoxyribonucleoside 5'-triphosphate = DNA(n+1) + diphosphate. In terms of biological role, DNA-directed DNA polymerase involved in viral DNA replication. This chain is DNA polymerase beta, found in Ornithodoros (relapsing fever ticks).